Here is a 1111-residue protein sequence, read N- to C-terminus: Receptor-type guanylate cyclase gcy-14 (1111 aa).

Residues 1-14 form the signal peptide; the sequence is MCLFLLLFPYLASG. The Extracellular segment spans residues 15–473; sequence QFLQTVKVGL…ECPPDFVKEY (459 aa). N-linked (GlcNAc...) asparagine glycosylation is found at N65, N130, N318, N340, N365, and N379. The helical transmembrane segment at 474-494 threads the bilayer; it reads LVYTIIAAVIVVLALLAGCAG. Residues 482–817 form the Protein kinase domain; sequence VIVVLALLAG…KSNLMDHVFN (336 aa). Residues 488-496 and K545 each bind ATP; that span reads LLAGCAGLL. The Cytoplasmic segment spans residues 495 to 1111; it reads LLYTMQMKRK…DFNNGNECVS (617 aa). The region spanning 875-1005 is the Guanylate cyclase domain; sequence TIFFSDVVQF…DAVNTASRME (131 aa). Positions 1061 to 1082 are disordered; the sequence is SAQAPREKTPEPPRRQSVRSIS. Residues 1065 to 1074 show a composition bias toward basic and acidic residues; that stretch reads PREKTPEPPR.

The protein belongs to the adenylyl cyclase class-4/guanylyl cyclase family. Homodimer. Expressed asymmetrically in ASEL sensory neuron.

It is found in the cell membrane. The protein resides in the cell projection. It localises to the cilium. The catalysed reaction is GTP = 3',5'-cyclic GMP + diphosphate. In terms of biological role, guanylate cyclase involved in the production of the second messenger cGMP. Regulates chemotaxis responses toward Na(1+) and Li(1+) salt ions and alkaline pH in ASE left (ASEL) sensory neuron. Directly senses environmental alkalinity in ASEL neuron which probably leads to the activation of cGMP-gated cation channel tax2/tax4. This Caenorhabditis elegans protein is Receptor-type guanylate cyclase gcy-14.